Here is a 187-residue protein sequence, read N- to C-terminus: uncharacterized protein (187 aa).

The signal sequence occupies residues 1–17; the sequence is MYAGGRVVRSAFARGKV. C18 carries the N-palmitoyl cysteine lipid modification. C18 carries the S-diacylglycerol cysteine lipid modification.

The protein resides in the cell membrane. This is an uncharacterized protein from Treponema pallidum (strain Nichols).